The following is a 205-amino-acid chain: Small ribosomal subunit protein uS4c (205 aa).

The S4 RNA-binding domain maps to 93–154 (MRLDNTIFRL…RTQTIALIQQ (62 aa)).

It belongs to the universal ribosomal protein uS4 family. Part of the 30S ribosomal subunit. Contacts protein S5. The interaction surface between S4 and S5 is involved in control of translational fidelity.

It is found in the plastid. Its subcellular location is the chloroplast. Functionally, one of the primary rRNA binding proteins, it binds directly to 16S rRNA where it nucleates assembly of the body of the 30S subunit. In terms of biological role, with S5 and S12 plays an important role in translational accuracy. The polypeptide is Small ribosomal subunit protein uS4c (rps4) (Chaetosphaeridium globosum (Charophycean green alga)).